Here is a 430-residue protein sequence, read N- to C-terminus: Peptidoglycan DD-endopeptidase ShyA (430 aa).

Positions 1–35 (MISKSIILRFSELSMRKKATLVGLPLLAVAAISSS) are cleaved as a signal peptide. Zn(2+) contacts are provided by H297, D301, and H378.

The protein belongs to the peptidase M23B family. It depends on Zn(2+) as a cofactor.

Its subcellular location is the periplasm. The protein operates within cell wall degradation; peptidoglycan degradation. With respect to regulation, reduced activity in 0.5 mM EDTA and a complete loss of activity at higher EDTA concentrations. The effect of EDTA can be reversed by addition of 1 mM ZnCl(2). Conformational switching between open (catalytically active) and closed (catalytically inactive) conformation of this protein is suggested mechanism of its regulation. The signal or inducer of the conformational shift to the open form unmasking the active site is currently not understood. Functionally, cell wall peptidoglycan (PG) DD-endopeptidase essential for cell growth and elongation. Hydrolyzes peptide cross-links which covalently connect adjacent PG strands probably to allow insertion of new glycans and thus cell wall expansion. Degrades purified whole PG sacculi in vitro. Releases predominantly short glycan chains from the PG. Cleaves D,D cross-linked muropeptides specifically preferring dimeric tetrapeptide-tetrapeptide (D44) substrates and has only little activity on dimeric tetrapeptide-pentapeptide (D45) substrates. Also converts more than 50% of tetrapeptide-tripeptide (D43) to product as well as more than 50% of D43M, which contains D-Met instead of D-Ala in the fourth position of the acceptor moiety. Cleaves the D,D bond between diaminopimelic acid (DAP) and D-Ala of the PG substrate in vitro. No cleavage of L,D bond connecting two DAP moieties. In Vibrio cholerae serotype O1 (strain ATCC 39315 / El Tor Inaba N16961), this protein is Peptidoglycan DD-endopeptidase ShyA.